The chain runs to 363 residues: MGNTFGHLFRVTTFGESHGGGVGVVVDGCPPRLELSEVDIQKELDRRRPGQSRLTTPRQESDRCEILSGVFEGKTLGTPIAILVRNKDTRPEDYAEMAQVYRPSHADATYDAKYGIRNWQGGGRSSARETIGRVAAGAIARKILTQVAGTEIIAYVKRVKDIEAVVDPDTVAAAAVEANIMRCPDAATAEKMIALVDEVRRQANSIGGVIECVVRNVPVGLGSPVFDKLEADLAKGVMSLPASKGFEIGSGFAGTLLTGQEHNDEFYTDAQGRIRTRTNRSGGVQGGISNGENIILRVAFKPTATIGQAQKTVNRAGEETILAAKGRHDPCVLPRAVPMVEAMVALVLCDHLLRDHAQCHLNF.

NADP(+) is bound by residues Arg-47 and Arg-53. Residues 124–126, Gly-286, 301–305, and Arg-327 contribute to the FMN site; these read RSS and KPTAT.

It belongs to the chorismate synthase family. In terms of assembly, homotetramer. FMNH2 is required as a cofactor.

It carries out the reaction 5-O-(1-carboxyvinyl)-3-phosphoshikimate = chorismate + phosphate. The protein operates within metabolic intermediate biosynthesis; chorismate biosynthesis; chorismate from D-erythrose 4-phosphate and phosphoenolpyruvate: step 7/7. In terms of biological role, catalyzes the anti-1,4-elimination of the C-3 phosphate and the C-6 proR hydrogen from 5-enolpyruvylshikimate-3-phosphate (EPSP) to yield chorismate, which is the branch point compound that serves as the starting substrate for the three terminal pathways of aromatic amino acid biosynthesis. This reaction introduces a second double bond into the aromatic ring system. The polypeptide is Chorismate synthase (Thermosynechococcus vestitus (strain NIES-2133 / IAM M-273 / BP-1)).